Reading from the N-terminus, the 294-residue chain is Putative glutamine amidotransferase HI_1037 (294 aa).

The active site involves cysteine 18. Positions 18–266 constitute a Glutamine amidotransferase type-2 domain; it reads CQLLGMNCNT…NGGFVFFKNG (249 aa).

In Haemophilus influenzae (strain ATCC 51907 / DSM 11121 / KW20 / Rd), this protein is Putative glutamine amidotransferase HI_1037.